Reading from the N-terminus, the 571-residue chain is Putative diflavin flavoprotein A 1 (571 aa).

The zinc metallo-hydrolase stretch occupies residues 43–236; sequence ENGTTYNSFL…PPVQLVATGH (194 aa). Histidine 92, glutamate 94, aspartate 96, histidine 159, aspartate 178, and histidine 236 together coordinate Fe cation. The Flavodoxin-like domain maps to 265 to 426; it reads VAIFYAANYG…DLDKALGRLS (162 aa). Residues 427–571 form a flavodoxin-reductase-like region; sequence GGLYIITAQK…VHHRKVGNHY (145 aa).

The protein in the N-terminal section; belongs to the zinc metallo-hydrolase group 3 family. This sequence in the C-terminal section; belongs to the flavodoxin reductase family. Fe cation serves as cofactor.

Mediates electron transfer from NADH to oxygen, reducing it to water. This modular protein has 3 redox cofactors, in other organisms the same activity requires 2 or 3 proteins. In Thermosynechococcus vestitus (strain NIES-2133 / IAM M-273 / BP-1), this protein is Putative diflavin flavoprotein A 1 (dfa1).